A 148-amino-acid polypeptide reads, in one-letter code: Putative nickel-responsive regulator (148 aa).

The Ni(2+) site is built by His-88, His-99, His-101, and Cys-107.

It belongs to the transcriptional regulatory CopG/NikR family. The cofactor is Ni(2+).

In terms of biological role, transcriptional regulator. This Helicobacter pylori (strain HPAG1) protein is Putative nickel-responsive regulator.